We begin with the raw amino-acid sequence, 423 residues long: Glutamate-1-semialdehyde 2,1-aminomutase (423 aa).

Residue Lys-258 is modified to N6-(pyridoxal phosphate)lysine.

Belongs to the class-III pyridoxal-phosphate-dependent aminotransferase family. HemL subfamily. Requires pyridoxal 5'-phosphate as cofactor.

The protein resides in the cytoplasm. It catalyses the reaction (S)-4-amino-5-oxopentanoate = 5-aminolevulinate. Its pathway is porphyrin-containing compound metabolism; protoporphyrin-IX biosynthesis; 5-aminolevulinate from L-glutamyl-tRNA(Glu): step 2/2. This Pyrobaculum arsenaticum (strain DSM 13514 / JCM 11321 / PZ6) protein is Glutamate-1-semialdehyde 2,1-aminomutase.